The following is a 928-amino-acid chain: Protein Niban 1 (928 aa).

Residue glycine 2 is the site of N-myristoyl glycine attachment. 5 positions are modified to phosphoserine: serine 579, serine 582, serine 596, serine 602, and serine 646. Polar residues predominate over residues valine 580–serine 596. Residues valine 580 to arginine 600 form a disordered region. Disordered regions lie at residues valine 618 to glutamine 654 and alanine 669 to glycine 707. The segment covering leucine 690–glutamate 701 has biased composition (acidic residues). A Phosphoserine modification is found at serine 708. Disordered regions lie at residues proline 723–serine 877 and proline 899–glutamate 928. Positions glycine 801–glutamate 818 are enriched in low complexity. Over residues histidine 825–glutamate 834 the composition is skewed to basic and acidic residues. The span at methionine 865 to serine 877 shows a compositional bias: low complexity. The span at leucine 905 to glutamate 915 shows a compositional bias: basic and acidic residues. Position 926 is a phosphoserine (serine 926).

The protein belongs to the Niban family. In terms of tissue distribution, expressed in various types of thyroid tumor such as papillary thyroid carcinomas and oxyphilic thyroid tumors but not in normal thyroid tissue (at protein level). Strongly expressed in heart, skeletal muscle, pancreas, white blood cells and prostate with moderate expression in colon and spleen. Expressed in renal carcinoma cells but not in normal kidney.

It is found in the cytoplasm. The protein resides in the membrane. Regulates phosphorylation of a number of proteins involved in translation regulation including EIF2A, EIF4EBP1 and RPS6KB1. May be involved in the endoplasmic reticulum stress response. The chain is Protein Niban 1 from Homo sapiens (Human).